The chain runs to 248 residues: uncharacterized protein (248 aa).

This sequence to M.jannaschii MJ1452.

This is an uncharacterized protein from Methanothermobacter thermautotrophicus (strain ATCC 29096 / DSM 1053 / JCM 10044 / NBRC 100330 / Delta H) (Methanobacterium thermoautotrophicum).